We begin with the raw amino-acid sequence, 70 residues long: Small ribosomal subunit protein bS21 (70 aa).

Residues 40–70 are disordered; the sequence is KPTAERKRKHAAAVKRHYKRIRSQQLPPRLY. The segment covering 45-61 has biased composition (basic residues); that stretch reads RKRKHAAAVKRHYKRIR.

Belongs to the bacterial ribosomal protein bS21 family.

In Bordetella parapertussis (strain 12822 / ATCC BAA-587 / NCTC 13253), this protein is Small ribosomal subunit protein bS21.